The sequence spans 266 residues: Putative hydro-lyase Jann_2570 (266 aa).

The protein belongs to the D-glutamate cyclase family.

This is Putative hydro-lyase Jann_2570 from Jannaschia sp. (strain CCS1).